The chain runs to 1172 residues: Thrombospondin-2 (1172 aa).

The first 18 residues, Met-1–Ala-18, serve as a signal peptide directing secretion. The region spanning Gly-19 to Asp-215 is the Laminin G-like domain. Residues Gly-19–Ala-232 form a heparin-binding region. 3 N-linked (GlcNAc...) asparagine glycosylation sites follow: Asn-151, Asn-316, and Asn-330. One can recognise a VWFC domain in the interval Ser-318–Ser-375. 3 consecutive TSP type-1 domains span residues Asp-381–Asp-431, Asn-437–Pro-492, and Asp-494–Pro-549. Disulfide bonds link Cys-393–Cys-425, Cys-397–Cys-430, Cys-408–Cys-415, Cys-449–Cys-486, Cys-453–Cys-491, Cys-464–Cys-476, Cys-506–Cys-543, Cys-510–Cys-548, Cys-521–Cys-533, Cys-553–Cys-564, Cys-558–Cys-574, Cys-577–Cys-588, Cys-594–Cys-610, Cys-601–Cys-619, Cys-622–Cys-646, Cys-652–Cys-665, Cys-659–Cys-678, Cys-680–Cys-691, Cys-707–Cys-715, Cys-720–Cys-740, Cys-756–Cys-776, Cys-779–Cys-799, Cys-815–Cys-835, Cys-838–Cys-858, Cys-876–Cys-896, Cys-912–Cys-932, and Cys-948–Cys-1169. A glycan (N-linked (GlcNAc...) asparagine) is linked at Asn-457. Residues Pro-549 to Glu-589 enclose the EGF-like 1 domain. Residue Asn-584 is glycosylated (N-linked (GlcNAc...) asparagine). Positions Pro-648 to Gly-692 constitute an EGF-like 2 domain. TSP type-3 repeat units follow at residues Glu-693–Gln-728, Glu-729–Gln-764, Leu-765–Gln-787, Ile-788–Gln-823, Arg-824–Gln-846, Ile-847–Gln-884, Ala-885–Gln-920, and Glu-921–Glu-956. An N-linked (GlcNAc...) asparagine glycan is attached at Asn-710. The disordered stretch occupies residues Gly-727–Glu-752. Positions Ala-739–Val-749 are enriched in acidic residues. The segment at Gln-846–Asn-938 is disordered. The segment covering Ile-847 to Asp-866 has biased composition (acidic residues). A compositionally biased stretch (polar residues) spans Gln-870–Gln-884. Over residues Ala-885–Ala-895 the composition is skewed to basic and acidic residues. Residues Cys-896 to Val-905 are compositionally biased toward acidic residues. A compositionally biased stretch (basic and acidic residues) spans Gly-925–Asp-935. The Cell attachment site motif lies at Arg-928–Asp-930. Residues Arg-960–Ala-1172 form the TSP C-terminal domain. A glycan (N-linked (GlcNAc...) asparagine) is linked at Asn-1069.

The protein belongs to the thrombospondin family. Homotrimer; disulfide-linked. Can bind to fibrinogen, fibronectin, laminin and type V collagen. Interacts (via the TSP type I repeats) with CD36; the interaction conveys an antiangiogenic effect. Interacts (via the TSP type I repeats) with HRG; the interaction blocks the antiangiogenic effect of THBS2 with CD36. Can bind to fibrinogen, fibronectin, laminin.

Functionally, adhesive glycoprotein that mediates cell-to-cell and cell-to-matrix interactions. Ligand for CD36 mediating antiangiogenic properties. In Mus musculus (Mouse), this protein is Thrombospondin-2 (Thbs2).